The following is a 556-amino-acid chain: MSVSAFNRRWAAVILEALTRHGVRHVCIAPGSRSTPLTLAAAENPAFIHHTHFDERGLGHLALGLAKASKQPVAVIVTSGTAVANLYPALIEAGLTGEKLILLTADRPPELIDCGANQAIRQAGIFASHPSQTLSLPRPTQDIPARWLVSTIDNALAMLHAGALHINCPFAEPLYGDMNDTGLVWQQRLGDWWQDEKPWLREARRRESDKQRDWFFWRQKRGVVVAGRMSAEEGKKVAQWAQTLGWPLIGDVLSQTGQPLPCADLWLGNAKAVTELQQAQIVVQLGSSLTGKRLLQWQATCEPEEYWVIDNIEGRLDPAHHRGRRLVAKIADWLELHPAEKRKPWCVEIPRLAELAWQRVVAQRDTFGEAQLAHRIRDYLPEQGQLFVGNSLVVRLIDALSQLPAGYPVYSNRGASGIDGLLSTAAGVQRASAKSTLAIVGDLSALYDLNALALLRQVSAPFVLIVVNNNGGQIFSLLPTPQSKRERFYLMPQNVHFDHAAAMFNLRYHRPENWEELELALASAWRTPATTLIELVVNETDGAQTLQQLLAQVSHL.

The protein belongs to the TPP enzyme family. MenD subfamily. As to quaternary structure, homodimer. Mg(2+) is required as a cofactor. It depends on Mn(2+) as a cofactor. Thiamine diphosphate serves as cofactor.

It catalyses the reaction isochorismate + 2-oxoglutarate + H(+) = 5-enolpyruvoyl-6-hydroxy-2-succinyl-cyclohex-3-ene-1-carboxylate + CO2. It functions in the pathway quinol/quinone metabolism; 1,4-dihydroxy-2-naphthoate biosynthesis; 1,4-dihydroxy-2-naphthoate from chorismate: step 2/7. The protein operates within quinol/quinone metabolism; menaquinone biosynthesis. Functionally, catalyzes the thiamine diphosphate-dependent decarboxylation of 2-oxoglutarate and the subsequent addition of the resulting succinic semialdehyde-thiamine pyrophosphate anion to isochorismate to yield 2-succinyl-5-enolpyruvyl-6-hydroxy-3-cyclohexene-1-carboxylate (SEPHCHC). The chain is 2-succinyl-5-enolpyruvyl-6-hydroxy-3-cyclohexene-1-carboxylate synthase from Salmonella arizonae (strain ATCC BAA-731 / CDC346-86 / RSK2980).